Consider the following 388-residue polypeptide: (S)-8-oxocitronellyl enol synthase (388 aa).

Residues 38–40 (TGI), 66–67 (RR), 84–85 (DV), 108–109 (SW), and glutamine 142 contribute to the NADP(+) site. Catalysis depends on residues lysine 146 and tyrosine 178. Substrate-binding residues include lysine 146 and tyrosine 178. NADP(+) is bound by residues tyrosine 178, valine 204, and 211–213 (SMM). Serine 349 contributes to the substrate binding site.

It belongs to the short-chain dehydrogenases/reductases (SDR) family. Highly divergent. In terms of assembly, homodimer. Expressed in internal phloem-associated parenchyma (IPAP) cells.

The protein localises to the cytoplasm. Its subcellular location is the cytosol. The catalysed reaction is (S)-8-oxocitronellyl enol + NADP(+) = (6E)-8-oxogeranial + NADPH + H(+). It catalyses the reaction (S)-8-oxocitronellyl enol + NAD(+) = (6E)-8-oxogeranial + NADH + H(+). Functionally, iridoid synthase that catalyzes the first step in generation of the iridoid ring scaffold using the linear monoterpene (6E)-8-oxogeranial as substrate. Iridoids comprise a large family of distinctive bicyclic monoterpenes that possess a wide range of pharmacological activities, including anticancer, anti-inflammatory, antifungal and antibacterial activities. This Catharanthus roseus (Madagascar periwinkle) protein is (S)-8-oxocitronellyl enol synthase.